We begin with the raw amino-acid sequence, 63 residues long: Serine protease inhibitor 3 (63 aa).

An N-terminal signal peptide occupies residues 1–23 (MAKLLAVFLVLLIAALVCEQALA). 3 disulfides stabilise this stretch: Cys24–Cys39, Cys34–Cys52, and Cys37–Cys47. The region spanning 24–55 (CTPGSRKYDGCNWCTCSSGGAWICTLKYCPPS) is the Pacifastin domain.

This sequence belongs to the protease inhibitor I19 family. In terms of tissue distribution, expressed in hemolymph, ovaries, testes and fat body of adults but are absent in the gut. Also present in larval hemolymph and fat body.

Its subcellular location is the secreted. Its function is as follows. In vitro, active against alpha-chymotrypsin. The sequence is that of Serine protease inhibitor 3 from Schistocerca gregaria (Desert locust).